A 268-amino-acid chain; its full sequence is Tryptophan synthase alpha chain (268 aa).

Active-site proton acceptor residues include glutamate 49 and aspartate 60.

The protein belongs to the TrpA family. Tetramer of two alpha and two beta chains.

The enzyme catalyses (1S,2R)-1-C-(indol-3-yl)glycerol 3-phosphate + L-serine = D-glyceraldehyde 3-phosphate + L-tryptophan + H2O. It functions in the pathway amino-acid biosynthesis; L-tryptophan biosynthesis; L-tryptophan from chorismate: step 5/5. Its function is as follows. The alpha subunit is responsible for the aldol cleavage of indoleglycerol phosphate to indole and glyceraldehyde 3-phosphate. The polypeptide is Tryptophan synthase alpha chain (Aeromonas salmonicida (strain A449)).